The chain runs to 172 residues: Orotate phosphoribosyltransferase (172 aa).

5-phospho-alpha-D-ribose 1-diphosphate is bound by residues R88, K89, K92, H94, and 113–121 (EDVTTSGGS). Orotate is bound by residues T117 and R145.

It belongs to the purine/pyrimidine phosphoribosyltransferase family. PyrE subfamily. In terms of assembly, homodimer. It depends on Mg(2+) as a cofactor.

The catalysed reaction is orotidine 5'-phosphate + diphosphate = orotate + 5-phospho-alpha-D-ribose 1-diphosphate. It participates in pyrimidine metabolism; UMP biosynthesis via de novo pathway; UMP from orotate: step 1/2. In terms of biological role, catalyzes the transfer of a ribosyl phosphate group from 5-phosphoribose 1-diphosphate to orotate, leading to the formation of orotidine monophosphate (OMP). The protein is Orotate phosphoribosyltransferase of Methanospirillum hungatei JF-1 (strain ATCC 27890 / DSM 864 / NBRC 100397 / JF-1).